A 306-amino-acid chain; its full sequence is 4-diphosphocytidyl-2-C-methyl-D-erythritol kinase (306 aa).

The active site involves Lys-11. An ATP-binding site is contributed by 98–108 (PIAGGMGGGSA). Residue Asp-140 is part of the active site.

It belongs to the GHMP kinase family. IspE subfamily.

It carries out the reaction 4-CDP-2-C-methyl-D-erythritol + ATP = 4-CDP-2-C-methyl-D-erythritol 2-phosphate + ADP + H(+). Its pathway is isoprenoid biosynthesis; isopentenyl diphosphate biosynthesis via DXP pathway; isopentenyl diphosphate from 1-deoxy-D-xylulose 5-phosphate: step 3/6. Its function is as follows. Catalyzes the phosphorylation of the position 2 hydroxy group of 4-diphosphocytidyl-2C-methyl-D-erythritol. The chain is 4-diphosphocytidyl-2-C-methyl-D-erythritol kinase from Leifsonia xyli subsp. xyli (strain CTCB07).